The chain runs to 241 residues: Probable pectate lyase D (241 aa).

Positions 1–17 (MYQKSLLFSLLATSALA) are cleaved as a signal peptide. Asparagine 215 carries an N-linked (GlcNAc...) asparagine glycan. Positions 215–241 (NNSGDEPEEVSEGPSDACQYSEPLSSC) are disordered.

Belongs to the polysaccharide lyase 3 family. Requires Ca(2+) as cofactor.

The protein resides in the secreted. It catalyses the reaction Eliminative cleavage of (1-&gt;4)-alpha-D-galacturonan to give oligosaccharides with 4-deoxy-alpha-D-galact-4-enuronosyl groups at their non-reducing ends.. In terms of biological role, pectinolytic enzyme consist of four classes of enzymes: pectin lyase, polygalacturonase, pectin methylesterase and rhamnogalacturonase. Among pectinolytic enzymes, pectin lyase is the most important in depolymerization of pectin, since it cleaves internal glycosidic bonds of highly methylated pectins. Favors pectate, the anion, over pectin, the methyl ester. The protein is Probable pectate lyase D (plyD) of Neosartorya fischeri (strain ATCC 1020 / DSM 3700 / CBS 544.65 / FGSC A1164 / JCM 1740 / NRRL 181 / WB 181) (Aspergillus fischerianus).